Reading from the N-terminus, the 134-residue chain is Photosystem II assembly factor lipoprotein Psb27 (134 aa).

A signal peptide spans 1 to 21 (MKRFWAMVCALFLSVSLLLTS). Cys22 is lipidated: N-palmitoyl cysteine. Cys22 carries the S-diacylglycerol cysteine lipid modification.

The protein belongs to the Psb27 family. As to quaternary structure, part of a photosystem II (PSII) assembly intermediate complex PSII-I; crystallized from a strain deleted of psbJ, it forms monomeric PSII before addition of the oxygen evolving complex. PSII-I includes 3 assembly factors not found in mature PSII (Psb27, Psb28 and Psb34). Binds to the lumenal side of PSII, adjacent to the CP43 (psbC) subunit.

It is found in the cellular thylakoid membrane. Plays a role in the repair and/or biogenesis of the calcium-manganese-oxide cluster on the lumenal face of the thylakoid membrane. Its presence in a photosystem II (PSII) preparation prevents binding of other extrinsic subunits PsbO, PsbU and PsbV, and thus assembly of calcium-manganese-oxide cluster. Psb27-containing complexes lack oxygen evolving activity and an oxidizable calcium-manganese-oxide cluster, but have a normal reaction center. This Thermosynechococcus vestitus (strain NIES-2133 / IAM M-273 / BP-1) protein is Photosystem II assembly factor lipoprotein Psb27.